A 168-amino-acid polypeptide reads, in one-letter code: ATP synthase subunit b (168 aa).

A helical transmembrane segment spans residues 9-29 (AIPFGTIAYTLFIFLLLLVML).

It belongs to the ATPase B chain family. As to quaternary structure, F-type ATPases have 2 components, F(1) - the catalytic core - and F(0) - the membrane proton channel. F(1) has five subunits: alpha(3), beta(3), gamma(1), delta(1), epsilon(1). F(0) has three main subunits: a(1), b(2) and c(10-14). The alpha and beta chains form an alternating ring which encloses part of the gamma chain. F(1) is attached to F(0) by a central stalk formed by the gamma and epsilon chains, while a peripheral stalk is formed by the delta and b chains.

Its subcellular location is the cell membrane. Its function is as follows. F(1)F(0) ATP synthase produces ATP from ADP in the presence of a proton or sodium gradient. F-type ATPases consist of two structural domains, F(1) containing the extramembraneous catalytic core and F(0) containing the membrane proton channel, linked together by a central stalk and a peripheral stalk. During catalysis, ATP synthesis in the catalytic domain of F(1) is coupled via a rotary mechanism of the central stalk subunits to proton translocation. Component of the F(0) channel, it forms part of the peripheral stalk, linking F(1) to F(0). The protein is ATP synthase subunit b of Bacillus thuringiensis (strain Al Hakam).